A 347-amino-acid polypeptide reads, in one-letter code: UDP-N-acetylenolpyruvoylglucosamine reductase (347 aa).

In terms of domain architecture, FAD-binding PCMH-type spans 33 to 221 (AGGSAERIYL…SGAWFALPRD (189 aa)). Arg-180 is a catalytic residue. The active-site Proton donor is the Ser-250. The active site involves Glu-320.

It belongs to the MurB family. FAD is required as a cofactor.

The protein localises to the cytoplasm. The enzyme catalyses UDP-N-acetyl-alpha-D-muramate + NADP(+) = UDP-N-acetyl-3-O-(1-carboxyvinyl)-alpha-D-glucosamine + NADPH + H(+). It participates in cell wall biogenesis; peptidoglycan biosynthesis. Functionally, cell wall formation. This Nitrosospira multiformis (strain ATCC 25196 / NCIMB 11849 / C 71) protein is UDP-N-acetylenolpyruvoylglucosamine reductase.